The primary structure comprises 459 residues: DNA-binding protein P3A2 (459 aa).

A disordered region spans residues 1 to 25 (MMISEDISEPSSPDTPFDDSDLLNS).

This sequence belongs to the NRF1/Ewg family.

The protein resides in the nucleus. In terms of biological role, transcriptional regulator that interacts with specific sites in the control region of the cyIIIa actin gene. Also binds specifically to similar target sites located in the regulatory region of the SM50 gene. The protein is DNA-binding protein P3A2 of Strongylocentrotus purpuratus (Purple sea urchin).